A 256-amino-acid chain; its full sequence is Ribonuclease 3 (256 aa).

An RNase III domain is found at Leu3 to Gly125. Glu38 is a binding site for Mg(2+). Asp42 is a catalytic residue. Mg(2+)-binding residues include Asp111 and Glu114. Residue Glu114 is part of the active site. The DRBM domain occupies Asp152–Lys222. A disordered region spans residues Lys229–Glu256.

It belongs to the ribonuclease III family. Homodimer. Mg(2+) serves as cofactor.

The protein localises to the cytoplasm. It catalyses the reaction Endonucleolytic cleavage to 5'-phosphomonoester.. Functionally, digests double-stranded RNA. Involved in the processing of primary rRNA transcript to yield the immediate precursors to the large and small rRNAs (23S and 16S). Processes some mRNAs, and tRNAs when they are encoded in the rRNA operon. Processes pre-crRNA and tracrRNA of type II CRISPR loci if present in the organism. The protein is Ribonuclease 3 of Cupriavidus taiwanensis (strain DSM 17343 / BCRC 17206 / CCUG 44338 / CIP 107171 / LMG 19424 / R1) (Ralstonia taiwanensis (strain LMG 19424)).